Consider the following 62-residue polypeptide: Photosystem II reaction center protein Z (62 aa).

The next 2 helical transmembrane spans lie at Leu-8 to Val-28 and Tyr-41 to Val-61.

The protein belongs to the PsbZ family. PSII is composed of 1 copy each of membrane proteins PsbA, PsbB, PsbC, PsbD, PsbE, PsbF, PsbH, PsbI, PsbJ, PsbK, PsbL, PsbM, PsbT, PsbX, PsbY, PsbZ, Psb30/Ycf12, at least 3 peripheral proteins of the oxygen-evolving complex and a large number of cofactors. It forms dimeric complexes.

It localises to the plastid. The protein resides in the chloroplast thylakoid membrane. In terms of biological role, may control the interaction of photosystem II (PSII) cores with the light-harvesting antenna, regulates electron flow through the 2 photosystem reaction centers. PSII is a light-driven water plastoquinone oxidoreductase, using light energy to abstract electrons from H(2)O, generating a proton gradient subsequently used for ATP formation. The chain is Photosystem II reaction center protein Z from Guillardia theta (Cryptophyte).